A 61-amino-acid chain; its full sequence is Large ribosomal subunit protein uL30 (61 aa).

Belongs to the universal ribosomal protein uL30 family. As to quaternary structure, part of the 50S ribosomal subunit.

The protein is Large ribosomal subunit protein uL30 of Frankia alni (strain DSM 45986 / CECT 9034 / ACN14a).